Consider the following 473-residue polypeptide: ATP synthase subunit beta (473 aa).

ATP is bound at residue 153 to 160; that stretch reads GGAGVGKT.

It belongs to the ATPase alpha/beta chains family. As to quaternary structure, F-type ATPases have 2 components, CF(1) - the catalytic core - and CF(0) - the membrane proton channel. CF(1) has five subunits: alpha(3), beta(3), gamma(1), delta(1), epsilon(1). CF(0) has three main subunits: a(1), b(2) and c(9-12). The alpha and beta chains form an alternating ring which encloses part of the gamma chain. CF(1) is attached to CF(0) by a central stalk formed by the gamma and epsilon chains, while a peripheral stalk is formed by the delta and b chains.

The protein localises to the cell inner membrane. It carries out the reaction ATP + H2O + 4 H(+)(in) = ADP + phosphate + 5 H(+)(out). In terms of biological role, produces ATP from ADP in the presence of a proton gradient across the membrane. The catalytic sites are hosted primarily by the beta subunits. In Rickettsia bellii (strain OSU 85-389), this protein is ATP synthase subunit beta.